We begin with the raw amino-acid sequence, 745 residues long: Elongation factor G, mitochondrial (745 aa).

In terms of domain architecture, tr-type G spans 40 to 317 (ERIRNIGISA…AVLDYLPNPG (278 aa)). GTP-binding positions include 49–56 (AHIDSGKT), 116–120 (DTPGH), and 170–173 (NKLD).

The protein belongs to the TRAFAC class translation factor GTPase superfamily. Classic translation factor GTPase family. EF-G/EF-2 subfamily.

The protein resides in the mitochondrion. The protein operates within protein biosynthesis; polypeptide chain elongation. In terms of biological role, mitochondrial GTPase that catalyzes the GTP-dependent ribosomal translocation step during translation elongation. During this step, the ribosome changes from the pre-translocational (PRE) to the post-translocational (POST) state as the newly formed A-site-bound peptidyl-tRNA and P-site-bound deacylated tRNA move to the P and E sites, respectively. Catalyzes the coordinated movement of the two tRNA molecules, the mRNA and conformational changes in the ribosome. Essential during development as it acts as a retrograde signal from mitochondria to the nucleus to slow down cell proliferation if mitochondrial energy output is low. In Drosophila sechellia (Fruit fly), this protein is Elongation factor G, mitochondrial.